The sequence spans 643 residues: RNA-binding protein RO60 (643 aa).

The TROVE domain maps to 63-473; sequence VENNAGGFVF…AFVNAPPTGK (411 aa). Residues 186–390 form an RNA-binding region; that stretch reads RTPTHLFEFV…SMPMTAMIRN (205 aa). The tract at residues 465–643 is VWFA-like domain; that stretch reads FVNAPPTGKR…IVHEFVTGKI (179 aa). Residues serine 482, serine 484, and threonine 549 each coordinate a divalent metal cation.

It belongs to the Ro 60 kDa family.

It is found in the cytoplasm. Functionally, RNA-binding protein that binds to misfolded non-coding RNAs, pre-5S rRNA, and several small cytoplasmic RNA molecules known as Y RNAs. The sequence is that of RNA-binding protein RO60 from Caenorhabditis elegans.